A 297-amino-acid polypeptide reads, in one-letter code: Pyrroline-5-carboxylate reductase 1 (297 aa).

It belongs to the pyrroline-5-carboxylate reductase family.

Its subcellular location is the cytoplasm. It carries out the reaction L-proline + NADP(+) = (S)-1-pyrroline-5-carboxylate + NADPH + 2 H(+). The enzyme catalyses L-proline + NAD(+) = (S)-1-pyrroline-5-carboxylate + NADH + 2 H(+). The protein operates within amino-acid biosynthesis; L-proline biosynthesis; L-proline from L-glutamate 5-semialdehyde: step 1/1. Its function is as follows. Catalyzes the reduction of 1-pyrroline-5-carboxylate (PCA) to L-proline. The sequence is that of Pyrroline-5-carboxylate reductase 1 (proH) from Bacillus subtilis (strain 168).